Here is a 170-residue protein sequence, read N- to C-terminus: Cathelicidin antimicrobial peptide (170 aa).

Residues methionine 1–alanine 30 form the signal peptide. The propeptide at glutamine 31–arginine 131 is cathelin-like domain (CLD). Intrachain disulfides connect cysteine 86–cysteine 97 and cysteine 108–cysteine 125. The interval leucine 150 to glycine 162 is active core.

Belongs to the cathelicidin family. Monomer, homodimer or homotrimer (in vitro). Oligomerizes as tetra- or hexamer in solution (in vitro). Post-translationally, proteolytically cleaved by proteinase PRTN3 into antibacterial peptide LL-37. Proteolytically cleaved by cathepsin CTSG and neutrophil elastase ELANE. Resistant to proteolytic degradation in solution, and when bound to both zwitterionic (mimicking mammalian membranes) and negatively charged membranes (mimicking bacterial membranes). In terms of processing, after secretion onto the skin surface, the CAMP gene product is processed by a serine protease-dependent mechanism into multiple novel antimicrobial peptides distinct from and shorter than cathelicidin LL-37. These peptides show enhanced antimicrobial action, acquiring the ability to kill skin pathogens such as S.aureus, E.coli and C.albicans. These peptides have lost the ability to stimulate CXCL8/IL8 release from keratinocytes. The peptides act synergistically, killing bacteria at lower concentrations when present together, and maintain activity at increased salt condition.

It localises to the secreted. It is found in the vesicle. In terms of biological role, antimicrobial protein that is an integral component of the innate immune system. Binds to bacterial lipopolysaccharides (LPS). Acts via neutrophil N-formyl peptide receptors to enhance the release of CXCL2. Postsecretory processing generates multiple cathelicidin antimicrobial peptides with various lengths which act as a topical antimicrobial defense in sweat on skin. The unprocessed precursor form, cathelicidin antimicrobial peptide, inhibits the growth of Gram-negative E.coli and E.aerogenes with efficiencies comparable to that of the mature peptide LL-37 (in vitro). Functionally, antimicrobial peptide that is an integral component of the innate immune system. Binds to bacterial lipopolysaccharides (LPS). Causes membrane permeabilization by forming transmembrane pores (in vitro). Causes lysis of E.coli. Exhibits antimicrobial activity against Gram-negative bacteria such as P.aeruginosa, S.typhimurium, E.aerogenes, E.coli and P.syringae, Gram-positive bacteria such as L.monocytogenes, S.epidermidis, S.pyogenes and S.aureus, as well as vancomycin-resistant enterococci (in vitro). Exhibits antimicrobial activity against methicillin-resistant S.aureus, P.mirabilis, and C.albicans in low-salt media, but not in media containing 100 mM NaCl (in vitro). Forms chiral supramolecular assemblies with quinolone signal (PQS) molecules of P.aeruginosa, which may lead to interference of bacterial quorum signaling and perturbance of bacterial biofilm formation. May form supramolecular fiber-like assemblies on bacterial membranes. Induces cytokine and chemokine producation as well as TNF/TNFA and CSF2/GMCSF production in normal human keratinocytes. Exhibits hemolytic activity against red blood cells. Exhibits antimicrobial activity against E.coli and B.megaterium (in vitro). The polypeptide is Cathelicidin antimicrobial peptide (Chlorocebus aethiops (Green monkey)).